We begin with the raw amino-acid sequence, 178 residues long: Endoribonuclease YbeY (178 aa).

Zn(2+)-binding residues include His-118, His-122, and His-128.

This sequence belongs to the endoribonuclease YbeY family. It depends on Zn(2+) as a cofactor.

Its subcellular location is the cytoplasm. Functionally, single strand-specific metallo-endoribonuclease involved in late-stage 70S ribosome quality control and in maturation of the 3' terminus of the 16S rRNA. The chain is Endoribonuclease YbeY from Mycobacterium leprae (strain Br4923).